Here is a 1786-residue protein sequence, read N- to C-terminus: uncharacterized protein (1786 aa).

3 disordered regions span residues 140 to 191, 203 to 329, and 400 to 480; these read QGLR…LPEA, RRES…RGGV, and GGSD…TPPE. A compositionally biased stretch (polar residues) spans 149–158; that stretch reads SDMNSQTSLT. Residues 232-247 show a composition bias toward low complexity; sequence GHAPEAPAPGESPASS. A compositionally biased stretch (polar residues) spans 248-259; sequence QCLPSQACENDF. Residues 306 to 329 show a composition bias toward basic and acidic residues; sequence TSCRQHREEAGDRAGAGEDKRGGV. Low complexity predominate over residues 422–438; the sequence is STTPSTNTTRTPSPISS. A compositionally biased stretch (pro residues) spans 467–480; sequence VPPPTGPGTATPPE. At T721 the chain carries Phosphothreonine. Disordered stretches follow at residues 746 to 907, 1081 to 1180, 1218 to 1242, 1291 to 1348, 1362 to 1460, and 1477 to 1550; these read SESK…SDGH, VRDV…NSSP, ASAQ…PKPA, KEGV…VSAR, SLYI…NSDC, and LLGR…EHTP. Composition is skewed to basic and acidic residues over residues 810-828 and 845-861; these read MQRE…DTSH and KPWE…HSEA. The span at 1105–1115 shows a compositional bias: low complexity; the sequence is KGSGDSSDKGS. Positions 1131-1140 are enriched in polar residues; the sequence is TPASGGSRSL. Residues 1153-1164 show a composition bias toward basic and acidic residues; sequence PREEGVDREPRE. Residues 1167-1180 are compositionally biased toward polar residues; that stretch reads SQVSNGGRLLNSSP. Position 1179 is a phosphoserine (S1179). 2 stretches are compositionally biased toward basic and acidic residues: residues 1223-1238 and 1301-1319; these read TPEK…EGKA and DPDK…DTGH. 3 stretches are compositionally biased toward polar residues: residues 1336–1345, 1389–1401, and 1504–1521; these read RNSNPSTESV, NVFT…TQKT, and ARSQ…SGTS. At R1767 the chain carries Omega-N-methylarginine.

This is an uncharacterized protein from Mus musculus (Mouse).